Reading from the N-terminus, the 206-residue chain is Imidazole glycerol phosphate synthase subunit HisH (206 aa).

Positions serine 5–leucine 206 constitute a Glutamine amidotransferase type-1 domain. Catalysis depends on cysteine 83, which acts as the Nucleophile. Catalysis depends on residues histidine 187 and glutamate 189.

Heterodimer of HisH and HisF.

The protein resides in the cytoplasm. It catalyses the reaction 5-[(5-phospho-1-deoxy-D-ribulos-1-ylimino)methylamino]-1-(5-phospho-beta-D-ribosyl)imidazole-4-carboxamide + L-glutamine = D-erythro-1-(imidazol-4-yl)glycerol 3-phosphate + 5-amino-1-(5-phospho-beta-D-ribosyl)imidazole-4-carboxamide + L-glutamate + H(+). The catalysed reaction is L-glutamine + H2O = L-glutamate + NH4(+). The protein operates within amino-acid biosynthesis; L-histidine biosynthesis; L-histidine from 5-phospho-alpha-D-ribose 1-diphosphate: step 5/9. Functionally, IGPS catalyzes the conversion of PRFAR and glutamine to IGP, AICAR and glutamate. The HisH subunit catalyzes the hydrolysis of glutamine to glutamate and ammonia as part of the synthesis of IGP and AICAR. The resulting ammonia molecule is channeled to the active site of HisF. The polypeptide is Imidazole glycerol phosphate synthase subunit HisH (Mycolicibacterium paratuberculosis (strain ATCC BAA-968 / K-10) (Mycobacterium paratuberculosis)).